A 406-amino-acid chain; its full sequence is Endo-xylogalacturonan hydrolase A (406 aa).

Positions 1-18 (MALYRNLYLLASLGLSSA) are cleaved as a signal peptide. 5 PbH1 repeats span residues 183 to 213 (ATNVVFSNLKMDANSKSDNPPKNTDGFDIGE), 214 to 257 (STYV…SVGS), 266 to 289 (VKNIYVTGATMINSTKAAGIKTYP), 299 to 320 (VSNVTFNDFTVDNSDYAFQIQS), and 333 to 375 (PGNA…SISG). Residue aspartate 228 is the Proton donor of the active site. The active site involves histidine 251. Asparagine 278 and asparagine 301 each carry an N-linked (GlcNAc...) asparagine glycan.

It belongs to the glycosyl hydrolase 28 family.

It is found in the secreted. In terms of biological role, pectinolytic enzyme involved in the degradation of xylogalacturonan (xga), a galacturonan backbone heavily substituted with xylose, and which is one important component of the hairy regions of pectin. Activity requires a galacturonic acid backbone substituted with xylose. The chain is Endo-xylogalacturonan hydrolase A (xghA) from Aspergillus tubingensis.